We begin with the raw amino-acid sequence, 390 residues long: Period circadian protein (390 aa).

4 disordered regions span residues 27–120 (VTAP…APPV), 164–188 (LEYS…WEGE), 247–266 (GGNG…STNQ), and 327–356 (SPSG…TSQA). The segment covering 93–114 (GTSGTGNSGDGGGGGGADGTGS) has biased composition (gly residues). Over residues 247 to 256 (GGNGNVGSGN) the composition is skewed to gly residues.

In terms of assembly, forms a heterodimer with timeless (TIM); the complex then translocates into the nucleus. Post-translationally, phosphorylated with a circadian rhythmicity, probably by the double-time protein (dbt). Phosphorylation could be implicated in the stability of per monomer and in the formation of heterodimer per-tim.

The protein localises to the nucleus. Its subcellular location is the cytoplasm. It localises to the perinuclear region. Its function is as follows. Essential for biological clock functions. Determines the period length of circadian and ultradian rhythms; an increase in PER dosage leads to shortened circadian rhythms and a decrease leads to lengthened circadian rhythms. Essential for the circadian rhythmicity of locomotor activity, eclosion behavior, and for the rhythmic component of the male courtship song that originates in the thoracic nervous system. The biological cycle depends on the rhythmic formation and nuclear localization of the TIM-PER complex. Light induces the degradation of TIM, which promotes elimination of PER. Nuclear activity of the heterodimer coordinatively regulates PER and TIM transcription through a negative feedback loop. Behaves as a negative element in circadian transcriptional loop. Does not appear to bind DNA, suggesting indirect transcriptional inhibition. In Drosophila tropicalis (Fruit fly), this protein is Period circadian protein (per).